The sequence spans 495 residues: Neuronal acetylcholine receptor subunit beta-4 (495 aa).

An N-terminal signal peptide occupies residues 1–20; sequence MRGTPLLLVSLFALLQPGDC. Topologically, residues 21–235 are extracellular; sequence RLANAEEKLM…IIKRKPLFYT (215 aa). 4 N-linked (GlcNAc...) asparagine glycosylation sites follow: Asn35, Asn92, Asn137, and Asn165. Cys152 and Cys166 form a disulfide bridge. Residues 236–256 form a helical membrane-spanning segment; the sequence is INLIIPCVLITSLAILVFYLP. The Cytoplasmic portion of the chain corresponds to 257–264; it reads SDCGEKMT. Residue Glu261 coordinates Na(+). The helical transmembrane segment at 265–285 threads the bilayer; that stretch reads LCISVLLALTFFLLLISKIVP. At 286-297 the chain is on the extracellular side; that stretch reads PTSLDIPLIGKY. Residues 298–318 form a helical membrane-spanning segment; the sequence is LLFTMVLVTFSIVTTVCVLNV. Over 319–463 the chain is Cytoplasmic; sequence HHRSPSTHTM…WKFVAMVVDR (145 aa). A helical transmembrane segment spans residues 464–484; sequence LFLWVFVIVCILGTMGLFLPP. The Extracellular segment spans residues 485-495; that stretch reads LFQIHAPSKGL.

It belongs to the ligand-gated ion channel (TC 1.A.9) family. Acetylcholine receptor (TC 1.A.9.1) subfamily. Beta-4/CHRNB4 sub-subfamily. Neuronal AChR is composed of two different types of subunits: alpha and beta. CHRNB4/Beta-4 subunit can be combined to CHRNA2/alpha-2, CHRNA3/alpha-3 or CHRNA4/alpha-4, CHRNA5/alpha-5 and CHRNB3/beta-3 to give rise to functional receptors. Forms stoichiometries such as (CHRNA3)2:(CHRNB4)3 or (CHRNA3:CHRNB4)2:CHRNB3. Interacts with RIC3; which is required for proper folding and assembly. Interacts with LYPD6. In terms of tissue distribution, predominantly expressed by immature T-cells in the thymus.

The protein localises to the synaptic cell membrane. The protein resides in the cell membrane. The catalysed reaction is K(+)(in) = K(+)(out). The enzyme catalyses Na(+)(in) = Na(+)(out). It carries out the reaction Ca(2+)(in) = Ca(2+)(out). Its activity is regulated as follows. Activated by a myriad of ligands such as acetylcholine, cytisine, nicotine, choline and epibatidine. The heteropentamer CHRNA3:CHRNB4 activity is blocked by the alpha-conotoxin ImI and AuIB. Its function is as follows. Component of neuronal acetylcholine receptors (nAChRs) that function as pentameric, ligand-gated cation channels with high calcium permeability among other activities. nAChRs are excitatory neurotrasnmitter receptors formed by a collection of nAChR subunits known to mediate synaptic transmission in the nervous system and the neuromuscular junction. Each nAchR subunit confers differential attributes to channel properties, including activation, deactivation and desensitization kinetics, pH sensitivity, cation permeability, and binding to allosteric modulators. CHRNB4 forms heteropentameric neuronal acetylcholine receptors with CHRNA2, CHRNA3 and CHRNA4, as well as CHRNA5 and CHRNB3 as accesory subunits. CHRNA3:CHRNB4 being predominant in neurons of the autonomic ganglia, it is known as ganglionic nicotinic receptor. CHRNA3:CHRNB4 or CHRNA3:CHRNA5:CHRNB4 play also an important role in the habenulo-interpeduncular tract, modulating the mesolimbic dopamine system and affecting reward circuits and addiction. Hypothalamic CHRNA3:CHRNB4 nAChR activation by nicotine leads to activation of POMC neurons and a decrease in food intake. The protein is Neuronal acetylcholine receptor subunit beta-4 (Chrnb4) of Mus musculus (Mouse).